The sequence spans 365 residues: Spore germination protein A2 (365 aa).

The next 11 membrane-spanning stretches (helical) occupy residues 12 to 32 (TFQG…LTLP), 45 to 65 (WITL…NTLI), 85 to 105 (WIGS…ASFE), 122 to 142 (PIQV…VGGL), 148 to 168 (LFPF…GISF), 187 to 207 (IANS…MLFL), 223 to 243 (LGFL…VGAL), 250 to 270 (TLIW…IFIE), 275 to 295 (FLLV…GYFA), 303 to 323 (FGLS…YFSL), and 338 to 358 (LGYI…IVAL).

This sequence belongs to the amino acid-polyamine-organocation (APC) superfamily. Spore germination protein (SGP) (TC 2.A.3.9) family.

Its subcellular location is the cell membrane. Its function is as follows. Involved in the germinative response to L-alanine. Could be an amino acid transporter. Forms a complex at the inner spore membrane which acts as a receptor for L-alanine, thus is involved in the stimulation of germination in response to alanine. Can stimulate germination in the absence of gerD and gerK gene products (fructose and glucose receptors, respectively), but the response is improved in their presence. The polypeptide is Spore germination protein A2 (gerAB) (Bacillus subtilis (strain 168)).